A 100-amino-acid polypeptide reads, in one-letter code: Small ribosomal subunit protein uS14c (100 aa).

A disordered region spans residues 1–31 (MAKKSLIQREKKRQKLEQKYHSIRRSSKKEI).

This sequence belongs to the universal ribosomal protein uS14 family. In terms of assembly, part of the 30S ribosomal subunit.

Its subcellular location is the plastid. The protein localises to the chloroplast. Its function is as follows. Binds 16S rRNA, required for the assembly of 30S particles. In Atropa belladonna (Belladonna), this protein is Small ribosomal subunit protein uS14c.